The chain runs to 258 residues: Phosphosulfolactate synthase (258 aa).

The protein belongs to the phosphosulfolactate synthase family.

It carries out the reaction (2R)-O-phospho-3-sulfolactate = phosphoenolpyruvate + sulfite + H(+). The protein operates within cofactor biosynthesis; coenzyme M biosynthesis; sulfoacetaldehyde from phosphoenolpyruvate and sulfite: step 1/4. Its function is as follows. Catalyzes the addition of sulfite to phosphoenolpyruvate (PEP) to yield (2R)-phospho-3-sulfolactate (PSL). This Methanothermobacter thermautotrophicus (strain ATCC 29096 / DSM 1053 / JCM 10044 / NBRC 100330 / Delta H) (Methanobacterium thermoautotrophicum) protein is Phosphosulfolactate synthase (comA).